The following is a 1039-amino-acid chain: Probable inorganic carbon transporter subunit DabA 2 (1039 aa).

Zn(2+) is bound by residues Cys462, Asp464, His721, and Cys736.

The protein belongs to the inorganic carbon transporter (TC 9.A.2) DabA family. As to quaternary structure, forms a complex with DabB. The cofactor is Zn(2+).

It is found in the cell inner membrane. Its function is as follows. Part of an energy-coupled inorganic carbon pump. The protein is Probable inorganic carbon transporter subunit DabA 2 of Nitrobacter hamburgensis (strain DSM 10229 / NCIMB 13809 / X14).